The following is a 356-amino-acid chain: Inositol monophosphatase 3 (356 aa).

Residues 11-31 form a helical membrane-spanning segment; it reads LGIGVFCLLGLGVLYHVYSGF. Mg(2+) contacts are provided by Glu127, Asp167, Leu169, Asp170, and Asp293. Residue Glu127 coordinates substrate. Residues 169-172 and Asp293 each bind substrate; that span reads LDAT.

Belongs to the inositol monophosphatase superfamily. It depends on Mg(2+) as a cofactor.

It localises to the membrane. It carries out the reaction a myo-inositol phosphate + H2O = myo-inositol + phosphate. It functions in the pathway polyol metabolism; myo-inositol biosynthesis; myo-inositol from D-glucose 6-phosphate: step 2/2. This chain is Inositol monophosphatase 3 (bpnt2), found in Xenopus tropicalis (Western clawed frog).